The chain runs to 344 residues: GDSL esterase/lipase At5g03590 (344 aa).

An N-terminal signal peptide occupies residues 1–19; that stretch reads MHYLMKLFFSLSLFFGING. The active-site Nucleophile is the S41. Residues N126, N227, and N238 are each glycosylated (N-linked (GlcNAc...) asparagine). D318 is a catalytic residue.

The protein belongs to the 'GDSL' lipolytic enzyme family.

It localises to the secreted. This Arabidopsis thaliana (Mouse-ear cress) protein is GDSL esterase/lipase At5g03590.